Reading from the N-terminus, the 432-residue chain is Polyamine export protein (432 aa).

Positions 1–201 (MIMELFHTIL…AEAGVLKTQE (201 aa)) constitute a CNNM transmembrane domain. Transmembrane regions (helical) follow at residues 2 to 22 (IMELFHTILAIVALILSSAVV), 61 to 81 (FITVVQILLNMVAILGGGIGE), 100 to 120 (WIAPTASTIAFILVTCLFILF), and 138 to 158 (LSVVGIMNFSMYVFKPLVWFF). 2 CBS domains span residues 220–279 (MTTR…NENV) and 286–345 (LLRK…SNEE).

The protein belongs to the UPF0053 family. PaeA subfamily.

Its subcellular location is the cell inner membrane. Functionally, involved in cadaverine and putrescine tolerance in stationary phase. May facilitate the efflux of both cadaverine and putrescine from the cytoplasm, reducing potentially toxic levels under certain stress conditions. In Haemophilus influenzae (strain ATCC 51907 / DSM 11121 / KW20 / Rd), this protein is Polyamine export protein.